We begin with the raw amino-acid sequence, 91 residues long: Large ribosomal subunit protein bL27 (91 aa).

Over residues 1 to 10 the composition is skewed to gly residues; sequence MAQKKGGGST. The disordered stretch occupies residues 1-20; sequence MAQKKGGGSTRNGRDSQPKM.

The protein belongs to the bacterial ribosomal protein bL27 family.

The chain is Large ribosomal subunit protein bL27 from Verminephrobacter eiseniae (strain EF01-2).